The following is a 510-amino-acid chain: MNRGNALLVLAVFVVASCGLAYELIAGALASYLLGDSILQFSSIIGAYLFAMGIGSWVSRYVADDALLARFVDLELLVGLFGGVSAAALFLLFALESAPFRLVLYALVTVIGVLVGMEIPLVMRMLHRRQAKFSDLVSRVLTFDYLGALAVSLLFPLVLAPRLGLVRTGFLFGLCNTAIAVWTLWHFRAELGLSARLRGAMAWRAGMVGAALLAGFAASDRLTHWSERALFGDEIIHAISSPYQRLVVTRWKDDLRLYINGNLQFSSRDEYRYHEALVLPALESVRGARRVLVLGGGDGLALRQILKYPQVEHVTLVDLDPRMTSLFSHAEALVALNQHAFSDPRVTVVNADAGQWLQTAADMFDVAIVDFPDPSNFSIGKLYSVPFYRLLSRHVADTGLVVIQATSPYFAPRSYWCVDATLKEAGYRTWPYHALVPSFGEWGFILAAPGRADFRPPTTYRVPTRFLDADTTHQMFSFAPDMPRPQVEPNRLNNQSLVRYFEEDWHGVLR.

6 consecutive transmembrane segments (helical) span residues 6-26 (ALLVLAVFVVASCGLAYELIA), 38-58 (ILQFSSIIGAYLFAMGIGSWV), 74-94 (LELLVGLFGGVSAAALFLLFA), 102-122 (LVLYALVTVIGVLVGMEIPLV), 140-160 (VLTFDYLGALAVSLLFPLVLA), and 165-185 (LVRTGFLFGLCNTAIAVWTLW). The PABS domain occupies 205 to 449 (AGMVGAALLA…GEWGFILAAP (245 aa)). The tract at residues 207–456 (MVGAALLAGF…AAPGRADFRP (250 aa)) is spermidine synthase. Q244 is an S-methyl-5'-thioadenosine binding site. Residues H274 and D298 each contribute to the spermidine site. S-methyl-5'-thioadenosine-binding positions include D318 and 352–353 (DA). The active-site Proton acceptor is D370.

Belongs to the spermidine/spermine synthase family. As to quaternary structure, homodimer or homotetramer.

Its subcellular location is the cell membrane. The catalysed reaction is S-adenosyl 3-(methylsulfanyl)propylamine + putrescine = S-methyl-5'-thioadenosine + spermidine + H(+). Its pathway is amine and polyamine biosynthesis; spermidine biosynthesis; spermidine from putrescine: step 1/1. Functionally, catalyzes the irreversible transfer of a propylamine group from the amino donor S-adenosylmethioninamine (decarboxy-AdoMet) to putrescine (1,4-diaminobutane) to yield spermidine. This Ralstonia nicotianae (strain ATCC BAA-1114 / GMI1000) (Ralstonia solanacearum) protein is Polyamine aminopropyltransferase 2.